A 490-amino-acid chain; its full sequence is Betaine aldehyde dehydrogenase (490 aa).

3 residues coordinate K(+): T26, I27, and D93. NAD(+) is bound at residue G150–W152. The active-site Charge relay system is the K162. K176 to E179 lines the NAD(+) pocket. V180 is a K(+) binding site. G230 to S233 lines the NAD(+) pocket. L246 contacts K(+). The active-site Proton acceptor is E252. NAD(+) is bound by residues G254, C286, and E387. C286 serves as the catalytic Nucleophile. C286 carries the cysteine sulfenic acid (-SOH) modification. The K(+) site is built by K457 and G460. E464 functions as the Charge relay system in the catalytic mechanism.

This sequence belongs to the aldehyde dehydrogenase family. In terms of assembly, dimer of dimers. The cofactor is K(+).

It carries out the reaction betaine aldehyde + NAD(+) + H2O = glycine betaine + NADH + 2 H(+). It participates in amine and polyamine biosynthesis; betaine biosynthesis via choline pathway; betaine from betaine aldehyde: step 1/1. In terms of biological role, involved in the biosynthesis of the osmoprotectant glycine betaine. Catalyzes the irreversible oxidation of betaine aldehyde to the corresponding acid. This chain is Betaine aldehyde dehydrogenase, found in Escherichia coli O139:H28 (strain E24377A / ETEC).